A 245-amino-acid polypeptide reads, in one-letter code: 2,3-bisphosphoglycerate-dependent phosphoglycerate mutase (245 aa).

Substrate-binding positions include 8-15, 21-22, Arg60, 87-90, Lys98, 114-115, and 183-184; these read RHGQSLWN, TG, ERHY, RR, and GN. The Tele-phosphohistidine intermediate role is filled by His9. Glu87 serves as the catalytic Proton donor/acceptor.

This sequence belongs to the phosphoglycerate mutase family. BPG-dependent PGAM subfamily.

It carries out the reaction (2R)-2-phosphoglycerate = (2R)-3-phosphoglycerate. It functions in the pathway carbohydrate degradation; glycolysis; pyruvate from D-glyceraldehyde 3-phosphate: step 3/5. Catalyzes the interconversion of 2-phosphoglycerate and 3-phosphoglycerate. This chain is 2,3-bisphosphoglycerate-dependent phosphoglycerate mutase, found in Bacillus cereus (strain G9842).